A 308-amino-acid chain; its full sequence is Putative S-adenosyl-L-methionine-dependent methyltransferase Mjls_1073 (308 aa).

Residues Asp-133 and 162–163 each bind S-adenosyl-L-methionine; that span reads DL.

This sequence belongs to the UPF0677 family.

Its function is as follows. Exhibits S-adenosyl-L-methionine-dependent methyltransferase activity. This Mycobacterium sp. (strain JLS) protein is Putative S-adenosyl-L-methionine-dependent methyltransferase Mjls_1073.